Consider the following 375-residue polypeptide: Alcohol dehydrogenase class-3 chain H (375 aa).

Ala1 carries the post-translational modification N-acetylalanine. 7 residues coordinate Zn(2+): Cys46, His68, Cys98, Cys101, Cys104, Cys112, and Cys175.

It belongs to the zinc-containing alcohol dehydrogenase family. Class-III subfamily. In terms of assembly, homodimer or heterodimer with L chain. Requires Zn(2+) as cofactor.

The protein resides in the cytoplasm. It catalyses the reaction a primary alcohol + NAD(+) = an aldehyde + NADH + H(+). The catalysed reaction is a secondary alcohol + NAD(+) = a ketone + NADH + H(+). It carries out the reaction S-(hydroxymethyl)glutathione + NADP(+) = S-formylglutathione + NADPH + H(+). The enzyme catalyses S-(hydroxymethyl)glutathione + NAD(+) = S-formylglutathione + NADH + H(+). Functionally, class-III ADH is remarkably ineffective in oxidizing ethanol, but it readily catalyzes the oxidation of long-chain primary alcohols and the oxidation of S-(hydroxymethyl) glutathione. The protein is Alcohol dehydrogenase class-3 chain H of Gadus morhua (Atlantic cod).